The sequence spans 257 residues: Acetylglutamate kinase (257 aa).

Residues 43–44 (GG), Arg-65, and Asn-157 contribute to the substrate site. ATP-binding positions include 180-185 (DVSGIL) and 208-210 (IIT).

Belongs to the acetylglutamate kinase family. ArgB subfamily. As to quaternary structure, homodimer.

It localises to the cytoplasm. It carries out the reaction N-acetyl-L-glutamate + ATP = N-acetyl-L-glutamyl 5-phosphate + ADP. Its pathway is amino-acid biosynthesis; L-arginine biosynthesis; N(2)-acetyl-L-ornithine from L-glutamate: step 2/4. Its function is as follows. Catalyzes the ATP-dependent phosphorylation of N-acetyl-L-glutamate. This is Acetylglutamate kinase from Edwardsiella ictaluri (strain 93-146).